Reading from the N-terminus, the 535-residue chain is Secreted lipase 5 (535 aa).

The N-terminal stretch at 1-17 (MHLKSLLLAALPLLLEA) is a signal peptide. Asn-32 and Asn-119 each carry an N-linked (GlcNAc...) asparagine glycan. Catalysis depends on Ser-241, which acts as the Acyl-ester intermediate. Asn-282, Asn-341, Asn-347, and Asn-432 each carry an N-linked (GlcNAc...) asparagine glycan.

This sequence belongs to the type-B carboxylesterase/lipase family.

The protein resides in the secreted. The catalysed reaction is a carboxylic ester + H2O = an alcohol + a carboxylate + H(+). Its function is as follows. Secreted lipase involved in plant virulence. Has a substrate preference for p-nitrophenyl esters with a carbon chain length of C8 (p-nitrophenyl caprylate). This is Secreted lipase 5 from Gibberella zeae (strain ATCC MYA-4620 / CBS 123657 / FGSC 9075 / NRRL 31084 / PH-1) (Wheat head blight fungus).